Consider the following 448-residue polypeptide: Exodeoxyribonuclease 7 large subunit (448 aa).

It belongs to the XseA family. Heterooligomer composed of large and small subunits.

Its subcellular location is the cytoplasm. The enzyme catalyses Exonucleolytic cleavage in either 5'- to 3'- or 3'- to 5'-direction to yield nucleoside 5'-phosphates.. Bidirectionally degrades single-stranded DNA into large acid-insoluble oligonucleotides, which are then degraded further into small acid-soluble oligonucleotides. The sequence is that of Exodeoxyribonuclease 7 large subunit from Exiguobacterium sp. (strain ATCC BAA-1283 / AT1b).